A 75-amino-acid chain; its full sequence is Peptide Ctri10036 (75 aa).

Residues 1-22 (MNSKYLFVFLILNVIFIDLCQG) form the signal peptide. Lys41 carries the lysine amide modification. The propeptide occupies 47 to 75 (ELGSQYDYLQDFRKRELDLDDLLSKFPDY).

This sequence belongs to the non-disulfide-bridged peptide (NDBP) superfamily. Short antimicrobial peptide (group 4) family. Expressed by the venom gland.

It localises to the secreted. In Chaerilus tricostatus (Scorpion), this protein is Peptide Ctri10036.